The sequence spans 534 residues: Serine/threonine-protein kinase Nek6 (534 aa).

A Protein kinase domain is found at 4 to 257; the sequence is YEVVEQIGRG…AGELLRHPYL (254 aa). Residues 10 to 18 and K33 each bind ATP; that span reads IGRGAYGSA. D129 (proton acceptor) is an active-site residue. 2 disordered regions span residues 278-306 and 425-449; these read KSNL…SSEA and KAHT…SSPK.

It belongs to the protein kinase superfamily. NEK Ser/Thr protein kinase family. NIMA subfamily. As to quaternary structure, interacts with DIS1. Post-translationally, ubiquitinated by the E3 ligase DIS1. Ubiquitination of NEK6 leads to its degradation via the 26S proteasome-dependent pathway. Expressed in anthers, pistils and leaves.

The protein resides in the cytoplasm. The catalysed reaction is L-seryl-[protein] + ATP = O-phospho-L-seryl-[protein] + ADP + H(+). It catalyses the reaction L-threonyl-[protein] + ATP = O-phospho-L-threonyl-[protein] + ADP + H(+). May be involved in plant development processes. This is Serine/threonine-protein kinase Nek6 from Oryza sativa subsp. japonica (Rice).